Consider the following 144-residue polypeptide: Flagellar assembly factor FliW (144 aa).

The protein belongs to the FliW family. Interacts with translational regulator CsrA and flagellin(s).

The protein localises to the cytoplasm. Functionally, acts as an anti-CsrA protein, binds CsrA and prevents it from repressing translation of its target genes, one of which is flagellin. Binds to flagellin and participates in the assembly of the flagellum. This Geobacillus kaustophilus (strain HTA426) protein is Flagellar assembly factor FliW.